The following is a 736-amino-acid chain: Microtubule-associated protein mu-2 (736 aa).

Belongs to the orthoreovirus mu-2 protein family. Interacts with protein mu-NS; in viral inclusions. Interacts with polymerase lambda-3; this interaction stimulates the ATPase activity of mu-2. It depends on a divalent metal cation as a cofactor.

The protein localises to the virion. It localises to the host cytoplasm. Its subcellular location is the host cytoskeleton. Its function is as follows. Minor inner capsid (core) component. Displays NTPase and RNA 5'-triphosphatase (RTPase) activities. ATP is the preferred substrate for hydrolysis. May function as a cofactor of polymerase lambda-3. Associates with microtubules and plays a role in the formation, structural organization and morphology of viral inclusions, where the assembly of cores and the replication of viral RNA occur. Together with mu-NS, recruits the other core proteins to these inclusions. This Mammalia (T2J) protein is Microtubule-associated protein mu-2 (M1).